A 415-amino-acid chain; its full sequence is Serine hydroxymethyltransferase (415 aa).

(6S)-5,6,7,8-tetrahydrofolate contacts are provided by residues L117 and G121–L123. K226 carries the post-translational modification N6-(pyridoxal phosphate)lysine. (6S)-5,6,7,8-tetrahydrofolate is bound by residues E241 and S349–F351.

This sequence belongs to the SHMT family. As to quaternary structure, homodimer. Pyridoxal 5'-phosphate is required as a cofactor.

The protein localises to the cytoplasm. It catalyses the reaction (6R)-5,10-methylene-5,6,7,8-tetrahydrofolate + glycine + H2O = (6S)-5,6,7,8-tetrahydrofolate + L-serine. Its pathway is one-carbon metabolism; tetrahydrofolate interconversion. It functions in the pathway amino-acid biosynthesis; glycine biosynthesis; glycine from L-serine: step 1/1. Functionally, catalyzes the reversible interconversion of serine and glycine with tetrahydrofolate (THF) serving as the one-carbon carrier. This reaction serves as the major source of one-carbon groups required for the biosynthesis of purines, thymidylate, methionine, and other important biomolecules. Also exhibits THF-independent aldolase activity toward beta-hydroxyamino acids, producing glycine and aldehydes, via a retro-aldol mechanism. The chain is Serine hydroxymethyltransferase from Geobacter metallireducens (strain ATCC 53774 / DSM 7210 / GS-15).